The primary structure comprises 209 residues: ATP-dependent Clp protease proteolytic subunit (209 aa).

Ser-107 (nucleophile) is an active-site residue. His-132 is an active-site residue.

The protein belongs to the peptidase S14 family. Fourteen ClpP subunits assemble into 2 heptameric rings which stack back to back to give a disk-like structure with a central cavity, resembling the structure of eukaryotic proteasomes.

Its subcellular location is the cytoplasm. The enzyme catalyses Hydrolysis of proteins to small peptides in the presence of ATP and magnesium. alpha-casein is the usual test substrate. In the absence of ATP, only oligopeptides shorter than five residues are hydrolyzed (such as succinyl-Leu-Tyr-|-NHMec, and Leu-Tyr-Leu-|-Tyr-Trp, in which cleavage of the -Tyr-|-Leu- and -Tyr-|-Trp bonds also occurs).. Its function is as follows. Cleaves peptides in various proteins in a process that requires ATP hydrolysis. Has a chymotrypsin-like activity. Plays a major role in the degradation of misfolded proteins. The chain is ATP-dependent Clp protease proteolytic subunit from Methylobacterium nodulans (strain LMG 21967 / CNCM I-2342 / ORS 2060).